The following is a 646-amino-acid chain: Threonine--tRNA ligase (646 aa).

A TGS domain is found at 1–63 (MAQISLTFPD…EADAKIAIHT (63 aa)). The interval 247–544 (DHRKLGKEME…LIENYAGKLP (298 aa)) is catalytic. 3 residues coordinate Zn(2+): Cys344, His395, and His521.

It belongs to the class-II aminoacyl-tRNA synthetase family. Homodimer. The cofactor is Zn(2+).

Its subcellular location is the cytoplasm. It carries out the reaction tRNA(Thr) + L-threonine + ATP = L-threonyl-tRNA(Thr) + AMP + diphosphate + H(+). Functionally, catalyzes the attachment of threonine to tRNA(Thr) in a two-step reaction: L-threonine is first activated by ATP to form Thr-AMP and then transferred to the acceptor end of tRNA(Thr). Also edits incorrectly charged L-seryl-tRNA(Thr). This is Threonine--tRNA ligase from Cereibacter sphaeroides (strain ATCC 17025 / ATH 2.4.3) (Rhodobacter sphaeroides).